The primary structure comprises 425 residues: Enolase (425 aa).

Q163 contacts (2R)-2-phosphoglycerate. Catalysis depends on E205, which acts as the Proton donor. Mg(2+) is bound by residues D242, E285, and D312. The (2R)-2-phosphoglycerate site is built by K337, R366, S367, and K388. K337 (proton acceptor) is an active-site residue.

The protein belongs to the enolase family. The cofactor is Mg(2+).

It localises to the cytoplasm. Its subcellular location is the secreted. The protein resides in the cell surface. The catalysed reaction is (2R)-2-phosphoglycerate = phosphoenolpyruvate + H2O. The protein operates within carbohydrate degradation; glycolysis; pyruvate from D-glyceraldehyde 3-phosphate: step 4/5. In terms of biological role, catalyzes the reversible conversion of 2-phosphoglycerate (2-PG) into phosphoenolpyruvate (PEP). It is essential for the degradation of carbohydrates via glycolysis. This chain is Enolase, found in Cereibacter sphaeroides (strain ATCC 17025 / ATH 2.4.3) (Rhodobacter sphaeroides).